The following is a 305-amino-acid chain: tRNA pseudouridine synthase B (305 aa).

Residue Asp-48 is the Nucleophile of the active site.

The protein belongs to the pseudouridine synthase TruB family. Type 1 subfamily.

It catalyses the reaction uridine(55) in tRNA = pseudouridine(55) in tRNA. In terms of biological role, responsible for synthesis of pseudouridine from uracil-55 in the psi GC loop of transfer RNAs. This chain is tRNA pseudouridine synthase B, found in Pseudomonas syringae pv. syringae (strain B728a).